The chain runs to 338 residues: Fructose-1,6-bisphosphatase class 1 (338 aa).

The Mg(2+) site is built by glutamate 91, aspartate 113, leucine 115, and aspartate 116. Residues aspartate 116–serine 119, asparagine 211, tyrosine 244, and lysine 277 contribute to the substrate site. Glutamate 283 contributes to the Mg(2+) binding site.

The protein belongs to the FBPase class 1 family. In terms of assembly, homotetramer. Mg(2+) serves as cofactor.

Its subcellular location is the cytoplasm. The enzyme catalyses beta-D-fructose 1,6-bisphosphate + H2O = beta-D-fructose 6-phosphate + phosphate. Its pathway is carbohydrate biosynthesis; gluconeogenesis. The sequence is that of Fructose-1,6-bisphosphatase class 1 from Oleidesulfovibrio alaskensis (strain ATCC BAA-1058 / DSM 17464 / G20) (Desulfovibrio alaskensis).